The chain runs to 96 residues: Small ribosomal subunit protein bS6 (96 aa).

It belongs to the bacterial ribosomal protein bS6 family.

Functionally, binds together with bS18 to 16S ribosomal RNA. This chain is Small ribosomal subunit protein bS6, found in Thermobifida fusca (strain YX).